The chain runs to 1049 residues: MVFPMWTLKRQILILFNIILISKLLGARWFPKTLPCDVTLDVPKNHVIVDCTDKHLTEIPGGIPTNTTNLTLTINHIPDISPASFHRLDHLVEIDFRCNCVPIPLGSKNNMCIKRLQIKPRSFSGLTYLKSLYLDGNQLLEIPQGLPPSLQLLSLEANNIFSIRKENLTELANIEILYLGQNCYYRNPCYVSYSIEKDAFLNLTKLKVLSLKDNNVTAVPTVLPSTLTELYLYNNMIAKIQEDDFNNLNQLQILDLSGNCPRCYNAPFPCAPCKNNSPLQIPVNAFDALTELKVLRLHSNSLQHVPPRWFKNINKLQELDLSQNFLAKEIGDAKFLHFLPSLIQLDLSFNFELQVYRASMNLSQAFSSLKSLKILRIRGYVFKELKSFNLSPLHNLQNLEVLDLGTNFIKIANLSMFKQFKRLKVIDLSVNKISPSGDSSEVGFCSNARTSVESYEPQVLEQLHYFRYDKYARSCRFKNKEASFMSVNESCYKYGQTLDLSKNSIFFVKSSDFQHLSFLKCLNLSGNLISQTLNGSEFQPLAELRYLDFSNNRLDLLHSTAFEELHKLEVLDISSNSHYFQSEGITHMLNFTKNLKVLQKLMMNDNDISSSTSRTMESESLRTLEFRGNHLDVLWREGDNRYLQLFKNLLKLEELDISKNSLSFLPSGVFDGMPPNLKNLSLAKNGLKSFSWKKLQCLKNLETLDLSHNQLTTVPERLSNCSRSLKNLILKNNQIRSLTKYFLQDAFQLRYLDLSSNKIQMIQKTSFPENVLNNLKMLLLHHNRFLCTCDAVWFVWWVNHTEVTIPYLATDVTCVGPGAHKGQSVISLDLYTCELDLTNLILFSLSISVSLFLMVMMTASHLYFWDVWYIYHFCKAKIKGYQRLISPDCCYDAFIVYDTKDPAVTEWVLAELVAKLEDPREKHFNLCLEERDWLPGQPVLENLSQSIQLSKKTVFVMTDKYAKTENFKIAFYLSHQRLMDEKVDVIILIFLEKPFQKSKFLQLRKRLCGSSVLEWPTNPQAHPYFWQCLKNALATDNHVAYSQVFKETV.

The first 26 residues, 1–26 (MVFPMWTLKRQILILFNIILISKLLG), serve as a signal peptide directing secretion. Topologically, residues 27–839 (ARWFPKTLPC…LYTCELDLTN (813 aa)) are extracellular. 6 LRR repeats span residues 43 to 64 (PKNHVIVDCTDKHLTEIPGGIP), 65 to 87 (TNTTNLTLTINHIPDISPASFHR), 110 to 126 (NMCIKRLQIKPRSFSGL), 127 to 149 (TYLKSLYLDGNQLLEIPQGLPPS), 151 to 170 (QLLSLEANNIFSIRKENLTE), and 171 to 195 (LANIEILYLGQNCYYRNPCYVSYSI). Residues asparagine 66 and asparagine 69 are each glycosylated (N-linked (GlcNAc...) asparagine). An N-linked (GlcNAc...) asparagine glycan is attached at asparagine 167. N-linked (GlcNAc...) asparagine glycosylation is found at asparagine 202 and asparagine 215. LRR repeat units follow at residues 203–226 (LTKLKVLSLKDNNVTAVPTVLPST), 228–247 (TELYLYNNMIAKIQEDDFNN), 248–275 (LNQLQILDLSGNCPRCYNAPFPCAPCKN), 289–312 (LTELKVLRLHSNSLQHVPPRWFKN), 314–337 (NKLQELDLSQNFLAKEIGDAKFLH), 339–368 (LPSLIQLDLSFNFELQVYRASMNLSQAFSS), 369–392 (LKSLKILRIRGYVFKELKSFNLSP), 396–419 (LQNLEVLDLGTNFIKIANLSMFKQ), and 421–443 (KRLKVIDLSVNKISPSGDSSEVG). Residue asparagine 361 is glycosylated (N-linked (GlcNAc...) asparagine). Asparagine 413 is a glycosylation site (N-linked (GlcNAc...) asparagine). N-linked (GlcNAc...) asparagine glycosylation occurs at asparagine 488. 4 LRR repeats span residues 492–515 (YKYGQTLDLSKNSIFFVKSSDFQH), 516–540 (LSFLKCLNLSGNLISQTLNGSEFQP), 541–564 (LAELRYLDFSNNRLDLLHSTAFEE), and 566–588 (HKLEVLDISSNSHYFQSEGITHM). 2 N-linked (GlcNAc...) asparagine glycosylation sites follow: asparagine 523 and asparagine 534. The N-linked (GlcNAc...) asparagine glycan is linked to asparagine 590. 8 LRR repeats span residues 595 to 618 (LKVLQKLMMNDNDISSSTSRTMES), 619 to 644 (ESLRTLEFRGNHLDVLWREGDNRYLQ), 649 to 672 (LLKLEELDISKNSLSFLPSGVFDG), 674 to 697 (PPNLKNLSLAKNGLKSFSWKKLQC), 698 to 721 (LKNLETLDLSHNQLTTVPERLSNC), 723 to 745 (RSLKNLILKNNQIRSLTKYFLQD), 746 to 769 (AFQLRYLDLSSNKIQMIQKTSFPE), and 772 to 795 (LNNLKMLLLHHNRFLCTCDAVWFV). N-linked (GlcNAc...) asparagine glycosylation is found at asparagine 679 and asparagine 720. An N-linked (GlcNAc...) asparagine glycan is attached at asparagine 799. A helical membrane pass occupies residues 840 to 860 (LILFSLSISVSLFLMVMMTAS). The Cytoplasmic segment spans residues 861-1049 (HLYFWDVWYI…AYSQVFKETV (189 aa)). Residues 889–1033 (CCYDAFIVYD…YFWQCLKNAL (145 aa)) enclose the TIR domain.

It belongs to the Toll-like receptor family. Homodimer. Interacts with MYD88 via their respective TIR domains. Interacts with UNC93B1. Interacts with SMPDL3B. As to expression, detected in brain, placenta, spleen, stomach, small intestine, lung and in plasmacytoid pre-dendritic cells. Expressed in peripheral mononuclear blood cells.

It is found in the endoplasmic reticulum membrane. The protein resides in the endosome. Its subcellular location is the lysosome. It localises to the cytoplasmic vesicle. The protein localises to the phagosome. With respect to regulation, activated by guanosine analogs including deoxyguanosine, 7-thia-8-oxoguanosine or 7-deazaguanosine in a RNA-independent manner. Activated by imiquimod. Its function is as follows. Endosomal receptor that plays a key role in innate and adaptive immunity. Controls host immune response against pathogens through recognition of uridine-containing single strand RNAs (ssRNAs) of viral origin or guanosine analogs. Upon binding to agonists, undergoes dimerization that brings TIR domains from the two molecules into direct contact, leading to the recruitment of TIR-containing downstream adapter MYD88 through homotypic interaction. In turn, the Myddosome signaling complex is formed involving IRAK4, IRAK1, TRAF6, TRAF3 leading to activation of downstream transcription factors NF-kappa-B and IRF7 to induce pro-inflammatory cytokines and interferons, respectively. In plasmacytoid dendritic cells, RNASET2 endonuclease cooperates with PLD3 or PLD4 5'-&gt;3' exonucleases to process RNA and release 2',3'-cyclic guanosine monophosphate (2',3'-cGMP) and cytidine-rich RNA fragments that occupy TLR7 ligand-binding pockets and trigger a signaling-competent state. This Homo sapiens (Human) protein is Toll-like receptor 7.